Reading from the N-terminus, the 142-residue chain is 3-hydroxyacyl-[acyl-carrier-protein] dehydratase FabZ (142 aa).

Residue His48 is part of the active site.

It belongs to the thioester dehydratase family. FabZ subfamily.

The protein localises to the cytoplasm. The catalysed reaction is a (3R)-hydroxyacyl-[ACP] = a (2E)-enoyl-[ACP] + H2O. Its function is as follows. Involved in unsaturated fatty acids biosynthesis. Catalyzes the dehydration of short chain beta-hydroxyacyl-ACPs and long chain saturated and unsaturated beta-hydroxyacyl-ACPs. This Desulforamulus reducens (strain ATCC BAA-1160 / DSM 100696 / MI-1) (Desulfotomaculum reducens) protein is 3-hydroxyacyl-[acyl-carrier-protein] dehydratase FabZ.